The chain runs to 441 residues: Cobyrinate a,c-diamide synthase (441 aa).

The GATase cobBQ-type domain maps to 243 to 434 (TVAVADDAAF…AHVHPESTAF (192 aa)). Catalysis depends on Cys323, which acts as the Nucleophile.

It belongs to the CobB/CbiA family. Mg(2+) is required as a cofactor.

The catalysed reaction is cob(II)yrinate + 2 L-glutamine + 2 ATP + 2 H2O = cob(II)yrinate a,c diamide + 2 L-glutamate + 2 ADP + 2 phosphate + 2 H(+). The protein operates within cofactor biosynthesis; adenosylcobalamin biosynthesis; cob(II)yrinate a,c-diamide from sirohydrochlorin (anaerobic route): step 10/10. Catalyzes the ATP-dependent amidation of the two carboxylate groups at positions a and c of cobyrinate, using either L-glutamine or ammonia as the nitrogen source. The protein is Cobyrinate a,c-diamide synthase of Halobacterium salinarum (strain ATCC 700922 / JCM 11081 / NRC-1) (Halobacterium halobium).